We begin with the raw amino-acid sequence, 156 residues long: Cell division protein SepF (156 aa).

The segment covering 23–36 has biased composition (basic and acidic residues); it reads SYEKEQTDMKKQQD. The tract at residues 23 to 49 is disordered; it reads SYEKEQTDMKKQQDPPEQQDVTFPKAQ.

The protein belongs to the SepF family. Homodimer. Interacts with FtsZ.

The protein resides in the cytoplasm. In terms of biological role, cell division protein that is part of the divisome complex and is recruited early to the Z-ring. Probably stimulates Z-ring formation, perhaps through the cross-linking of FtsZ protofilaments. Its function overlaps with FtsA. This is Cell division protein SepF from Bacillus anthracis (strain CDC 684 / NRRL 3495).